The primary structure comprises 871 residues: Rho guanine nucleotide exchange factor 26 (871 aa).

Disordered stretches follow at residues 1–49 (MDGE…LLIT), 86–233 (AQRR…NPSV), and 288–310 (PLGH…SLRR). S22 carries the phosphoserine modification. Residues 136–156 (PAPPPPPVLRPPRTPNAPAPC) are compositionally biased toward pro residues. Residues 173–192 (PTANGLAANNDSPGSGSQSG) are compositionally biased toward polar residues. A Phosphoserine modification is found at S392. Positions 439-623 (KRQEAIFEVI…SKLVRLCNEG (185 aa)) constitute a DH domain. In terms of domain architecture, PH spans 655–782 (WLVKRGELTA…WITALGHSSG (128 aa)). In terms of domain architecture, SH3 spans 789 to 850 (TSLTQVEIVR…PMECAKEITC (62 aa)).

Interacts with ICAM1 and RHOG. Isoform 1 is broadly expressed, with highest levels in liver (at protein level). Certain mRNA species appear to be specifically expressed in prostate and liver.

It localises to the cell projection. The protein resides in the ruffle. Activates RhoG GTPase by promoting the exchange of GDP by GTP. Required for the formation of membrane ruffles during macropinocytosis. Required for the formation of cup-like structures during trans-endothelial migration of leukocytes. In case of Salmonella enterica infection, activated by SopB, which induces cytoskeleton rearrangements and promotes bacterial entry. The protein is Rho guanine nucleotide exchange factor 26 (ARHGEF26) of Homo sapiens (Human).